Consider the following 531-residue polypeptide: Protein tweety homolog 2-like (531 aa).

Over 1 to 44 the chain is Extracellular; that stretch reads MASSRQDYIAPWWTYWLHNFPHLNFNFQTVDNTFKPEDASYQQS. The chain crosses the membrane as a helical span at residues 45–65; it reads LVFLACVSAVALGLCLLLLSV. The Cytoplasmic portion of the chain corresponds to 66 to 87; sequence YLTCLCCCRREEDEEVKRPDTC. Residues 88–108 form a helical membrane-spanning segment; sequence CVTWAAVITGLVICSAVGVGF. Topologically, residues 109 to 213 are extracellular; that stretch reads YGNSETNDGV…RTAFIEYYRW (105 aa). Asn129 carries an N-linked (GlcNAc...) asparagine glycan. Residues 214–234 form a helical membrane-spanning segment; it reads LTYLLLLILDLVICLLACLAL. Residues 235-239 lie on the Cytoplasmic side of the membrane; sequence AKQSR. The chain crosses the membrane as a helical span at residues 240–260; the sequence is WLLTVIMVCGMLTLIMSWASL. At 261–389 the chain is on the extracellular side; the sequence is GAGTATAVGT…GVCYDGVEGL (129 aa). Residues Asn283 and Asn352 are each glycosylated (N-linked (GlcNAc...) asparagine). The chain crosses the membrane as a helical span at residues 390–410; it reads LYLCLFSLLAACAFCALLCAV. Residues 411 to 531 lie on the Cytoplasmic side of the membrane; it reads PRAWMLIAIR…IRHFGTDFQV (121 aa).

Belongs to the tweety family.

It is found in the cell membrane. Its function is as follows. Probable large-conductance Ca(2+)-activated chloride channel. This is Protein tweety homolog 2-like (ttyh2l) from Danio rerio (Zebrafish).